Reading from the N-terminus, the 888-residue chain is Dilute domain-containing protein YPR089W (888 aa).

The region spanning 360-745 is the Dilute domain; sequence DIVLQSYWLS…KKFLNNKIKD (386 aa). Disordered stretches follow at residues 462 to 504, 805 to 827, and 865 to 888; these read KEQQ…NNSS, KQRQNEPQISRTNSGTSDFTGDE, and LNIPSSTAQRPAWSNNDDMEQNPW. Composition is skewed to polar residues over residues 809–823 and 867–880; these read NEPQISRTNSGTSDF and IPSSTAQRPAWSNN.

Its subcellular location is the golgi apparatus. The protein is Dilute domain-containing protein YPR089W of Saccharomyces cerevisiae (strain ATCC 204508 / S288c) (Baker's yeast).